A 342-amino-acid polypeptide reads, in one-letter code: Pre-mRNA-splicing factor 18 (342 aa).

Met-1 is subject to N-acetylmethionine.

It belongs to the PRP18 family. As to quaternary structure, heterodimer with PPIH. Interacts with PRPF4 and with the spliceosome. Part of a complex containing U4/U6 snRNPs.

It is found in the nucleus speckle. Its function is as follows. Participates in the second step of pre-mRNA splicing. This chain is Pre-mRNA-splicing factor 18 (PRPF18), found in Bos taurus (Bovine).